The following is an 850-amino-acid chain: Response regulator sskA (850 aa).

Disordered regions lie at residues 1-225 (MPDR…GASS) and 419-542 (IPQR…GQSP). Residues 7–25 (SQLLKSKLLRRSSTTATTS) show a composition bias toward low complexity. Over residues 117-138 (GANSRQEGSQNGSIQQSPTFTR) the composition is skewed to polar residues. The span at 144-163 (QLTEEKDKGKLQSREGDQRG) shows a compositional bias: basic and acidic residues. Residues 177-196 (SDPQYSLTTELANKPSTPQT) are compositionally biased toward polar residues. Positions 436–445 (HHSEPGEHGE) are enriched in basic and acidic residues. Over residues 477–490 (PSISILTTDSNMAS) the composition is skewed to polar residues. Pro residues predominate over residues 492–511 (PQPPVAAPQVPTPPGPPPES). One can recognise a Response regulatory domain in the interval 558–719 (NVLIVEDNII…WLEQKVTEWG (162 aa)). At Asp-607 the chain carries 4-aspartylphosphate. Residues 736–850 (FADEPQSSSP…DEEQQALDAT (115 aa)) are disordered. Over residues 762-782 (SSRTSTSPSSAAVNATARAFA) the composition is skewed to low complexity. The segment covering 819–828 (TLDSPASPLT) has biased composition (polar residues). The segment covering 839 to 850 (PGDEEQQALDAT) has biased composition (acidic residues).

It belongs to the SSK1 family.

It localises to the cytoplasm. In terms of biological role, final receptor of the osmolarity two-component system regulatory system, which controls activity of the sakA mitogen-activated protein kinase (MAPK) pathway in response to changes in the osmolarity of the extracellular environment. Regulates the germination in the airways that drives enhanced disease initiation and inflammation in the lungs. The sequence is that of Response regulator sskA from Aspergillus fumigatus (strain ATCC MYA-4609 / CBS 101355 / FGSC A1100 / Af293) (Neosartorya fumigata).